A 128-amino-acid chain; its full sequence is Fluoride-specific ion channel FluC (128 aa).

A run of 4 helical transmembrane segments spans residues 5–25 (IVAIFVGAGLGAVLRWFLGLA), 35–55 (LGTLAANLLGGYAIGIAAVVF), 67–87 (LFVITGFLGGLTTFSTYSVEV), and 96–116 (FGWAFAVAVLHLTGSFTLTAL). Na(+) contacts are provided by glycine 75 and threonine 78.

It belongs to the fluoride channel Fluc/FEX (TC 1.A.43) family.

Its subcellular location is the cell inner membrane. It catalyses the reaction fluoride(in) = fluoride(out). Its activity is regulated as follows. Na(+) is not transported, but it plays an essential structural role and its presence is essential for fluoride channel function. Functionally, fluoride-specific ion channel. Important for reducing fluoride concentration in the cell, thus reducing its toxicity. The polypeptide is Fluoride-specific ion channel FluC (Burkholderia vietnamiensis (strain G4 / LMG 22486) (Burkholderia cepacia (strain R1808))).